A 301-amino-acid chain; its full sequence is uncharacterized protein (301 aa).

Residues 1–21 form the signal peptide; sequence MKIKLILVLIVFLTIVNVNNS. 4 N-linked (GlcNAc...) asparagine glycosylation sites follow: Asn-19, Asn-59, Asn-102, and Asn-180.

It is found in the secreted. This is an uncharacterized protein from Dictyostelium discoideum (Social amoeba).